Consider the following 66-residue polypeptide: Gas vesicle protein A (66 aa).

The protein belongs to the gas vesicle GvpA family. As to quaternary structure, the gas vesicle shell is 2 nm thick and consists of a single layer of this protein. It forms helical ribs nearly perpendicular to the long axis of the vesicle.

The protein resides in the gas vesicle shell. Functionally, gas vesicles are hollow, gas filled proteinaceous nanostructures found in some microorganisms. During planktonic growth they allow positioning of the organism at a favorable depth for light or nutrient acquisition. GvpA forms the protein shell. This chain is Gas vesicle protein A, found in Thiocapsa pendens (Amoebobacter pendens).